The following is a 513-amino-acid chain: NADH-quinone oxidoreductase subunit N (513 aa).

14 helical membrane passes run 20-40 (SVGF…LIVV), 49-69 (STLL…FIYQ), 88-108 (FAIF…VITM), 117-137 (ISSM…MMMM), 144-164 (LMIF…AGYF), 178-198 (LIYG…IYGV), 219-239 (FVML…IGAV), 260-280 (LSVA…YVAL), 295-315 (WFTL…VVAL), 323-343 (LLAY…IVMD), 351-371 (LFYL…VVLI), 394-414 (GAAL…IGFI), 429-451 (IFMW…YMLI), and 474-494 (LVAQ…GLFF).

This sequence belongs to the complex I subunit 2 family. In terms of assembly, NDH-1 is composed of 14 different subunits. Subunits NuoA, H, J, K, L, M, N constitute the membrane sector of the complex.

Its subcellular location is the cell inner membrane. It catalyses the reaction a quinone + NADH + 5 H(+)(in) = a quinol + NAD(+) + 4 H(+)(out). Its function is as follows. NDH-1 shuttles electrons from NADH, via FMN and iron-sulfur (Fe-S) centers, to quinones in the respiratory chain. The immediate electron acceptor for the enzyme in this species is believed to be a menaquinone. Couples the redox reaction to proton translocation (for every two electrons transferred, four hydrogen ions are translocated across the cytoplasmic membrane), and thus conserves the redox energy in a proton gradient. The chain is NADH-quinone oxidoreductase subunit N from Chlorobium chlorochromatii (strain CaD3).